The following is a 154-amino-acid chain: Protein X (154 aa).

The interval 28–48 is disordered; that stretch reads RPLPGPLGTLPPASPPAVPTD. Positions 68-117 are mitochondrial targeting sequence; that stretch reads PCALRFTSARRMETTVNAHGNLPKVLHKRTLGLSAMSTTDLEAYFKDCVF.

The protein belongs to the orthohepadnavirus protein X family. In terms of assembly, may form homodimer. May interact with host CEBPA, CFLAR, CREB1, DDB1, E4F1, HBXIP, HSPD1/HSP60, NFKBIA, POLR2E and SMAD4. Interacts with host SMC5-SMC6 complex and induces its degradation. Interacts with host TRPC4AP; leading to prevent ubiquitination of TRPC4AP. Interacts with host PLSCR1; this interaction promotes ubiquitination and degradation of HBx and impairs HBx-mediated cell proliferation. A fraction may be phosphorylated in insect cells and HepG2 cells, a human hepatoblastoma cell line. Phosphorylated in vitro by host protein kinase C or mitogen-activated protein kinase. N-acetylated in insect cells.

The protein localises to the host cytoplasm. It localises to the host nucleus. Its subcellular location is the host mitochondrion. Multifunctional protein that plays a role in silencing host antiviral defenses and promoting viral transcription. Does not seem to be essential for HBV infection. May be directly involved in development of cirrhosis and liver cancer (hepatocellular carcinoma). Most of cytosolic activities involve modulation of cytosolic calcium. The effect on apoptosis is controversial depending on the cell types in which the studies have been conducted. May induce apoptosis by localizing in mitochondria and causing loss of mitochondrial membrane potential. May also modulate apoptosis by binding host CFLAR, a key regulator of the death-inducing signaling complex (DISC). Promotes viral transcription by using the host E3 ubiquitin ligase DDB1 to target the SMC5-SMC6 complex to proteasomal degradation. This host complex would otherwise bind to viral episomal DNA, and prevents its transcription. Moderately stimulates transcription of many different viral and cellular transcription elements. Promoters and enhancers stimulated by HBx contain DNA binding sites for NF-kappa-B, AP-1, AP-2, c-EBP, ATF/CREB, or the calcium-activated factor NF-AT. The protein is Protein X of Hepatitis B virus genotype B2 subtype adw (isolate China/patient4/1996) (HBV-B).